Reading from the N-terminus, the 313-residue chain is Dehydrogenase/reductase SDR family member 1 (313 aa).

Isoleucine 19 is an NAD(+) binding site. Omega-N-methylarginine is present on arginine 21. Aspartate 64 is a binding site for NAD(+). Serine 151 is a substrate binding site. NAD(+) is bound by residues tyrosine 163, lysine 167, and threonine 198. Tyrosine 163 (proton acceptor) is an active-site residue.

Belongs to the short-chain dehydrogenases/reductases (SDR) family.

It is found in the endoplasmic reticulum. It carries out the reaction 17alpha-estradiol + NADP(+) = estrone + NADPH + H(+). The catalysed reaction is testosterone + NADP(+) = androst-4-ene-3,17-dione + NADPH + H(+). The enzyme catalyses prostaglandin E1 + NADPH + H(+) = prostaglandin F1 + NADP(+). It catalyses the reaction isatin + NADPH + H(+) = 3-hydroxyindolin-2-one + NADP(+). Its function is as follows. NADPH-dependent oxidoreductase which catalyzes the reduction of some steroids (estrone, androstene-3,17-dione and cortisone) as well as prostaglandin E1, isatin and xenobiotics in vitro. May have a role in steroid and/or xenobiotic metabolism. This chain is Dehydrogenase/reductase SDR family member 1, found in Mus musculus (Mouse).